The following is a 260-amino-acid chain: Isoprenyl transferase (260 aa).

The active site involves Asp40. Residue Asp40 participates in Mg(2+) binding. Substrate-binding positions include 41–44 (GNGR), Trp45, Arg53, His57, and 85–87 (STE). Asn88 functions as the Proton acceptor in the catalytic mechanism. Residues Trp89, Arg91, Arg208, and 214-216 (RLS) each bind substrate. Mg(2+) is bound at residue Glu227.

Belongs to the UPP synthase family. Homodimer. Mg(2+) serves as cofactor.

Catalyzes the condensation of isopentenyl diphosphate (IPP) with allylic pyrophosphates generating different type of terpenoids. The chain is Isoprenyl transferase from Bacillus subtilis (strain 168).